Here is a 408-residue protein sequence, read N- to C-terminus: Dual-specificity RNA methyltransferase RlmN (408 aa).

E122 acts as the Proton acceptor in catalysis. Residues 128–369 enclose the Radical SAM core domain; that stretch reads EEDRGTLCIS…NRAGYASPIR (242 aa). C135 and C380 form a disulfide bridge. Positions 142, 146, and 149 each coordinate [4Fe-4S] cluster. S-adenosyl-L-methionine contacts are provided by residues 206–207, S238, 260–262, and N337; these read GE and SLH. C380 serves as the catalytic S-methylcysteine intermediate.

It belongs to the radical SAM superfamily. RlmN family. It depends on [4Fe-4S] cluster as a cofactor.

Its subcellular location is the cytoplasm. The enzyme catalyses adenosine(2503) in 23S rRNA + 2 reduced [2Fe-2S]-[ferredoxin] + 2 S-adenosyl-L-methionine = 2-methyladenosine(2503) in 23S rRNA + 5'-deoxyadenosine + L-methionine + 2 oxidized [2Fe-2S]-[ferredoxin] + S-adenosyl-L-homocysteine. The catalysed reaction is adenosine(37) in tRNA + 2 reduced [2Fe-2S]-[ferredoxin] + 2 S-adenosyl-L-methionine = 2-methyladenosine(37) in tRNA + 5'-deoxyadenosine + L-methionine + 2 oxidized [2Fe-2S]-[ferredoxin] + S-adenosyl-L-homocysteine. Its function is as follows. Specifically methylates position 2 of adenine 2503 in 23S rRNA and position 2 of adenine 37 in tRNAs. m2A2503 modification seems to play a crucial role in the proofreading step occurring at the peptidyl transferase center and thus would serve to optimize ribosomal fidelity. The protein is Dual-specificity RNA methyltransferase RlmN of Chelativorans sp. (strain BNC1).